A 452-amino-acid polypeptide reads, in one-letter code: MSRKKSNGGLRFQPAGGNRATQIPVGKKQRLLIERVAGDGRGIAFIEGRTWFVSGALGGEEVEARVLGARGKVVEARLERVFQASPERREAPCRHYARCGGCNLQHLPHDGQLALKQRLLAEQLQRVAGVQPEEWAAPLCGPEFGYRRRARVAVRWDVKQRQLDVGFRAEASQDIVAIDDCPVLVQPLQAIMRHLPTVLRSLSKPQTLGHVELFSGTAEAVLVRHVAALPAEDLARLEAFCREAGAQLWLQGEGDPAPVDAAQRLGFALEPWGMELAWRPGDFVQVNAQVNTLMIQQALAWLAPQAHERVLDLFCGLGNFALPLARQAREVVAVEGVQAMVERAEANAHGNNVYNARFFQADLSQPLAGAEWVAEGFSAVLLDPPRDGAYEVVQGIARLGAKRLVYVSCNPATLARDTQVLVGQGYRLKRAGILDMFPQTAHVEAMALFEAG.

Residues 1 to 23 form a disordered region; sequence MSRKKSNGGLRFQPAGGNRATQI. Residues 22–80 form the TRAM domain; it reads QIPVGKKQRLLIERVAGDGRGIAFIEGRTWFVSGALGGEEVEARVLGARGKVVEARLER. [4Fe-4S] cluster-binding residues include Cys93, Cys99, Cys102, and Cys181. S-adenosyl-L-methionine is bound by residues Gln285, Phe314, Asn319, Glu335, Asp362, and Asp383. Residue Cys409 is the Nucleophile of the active site.

The protein belongs to the class I-like SAM-binding methyltransferase superfamily. RNA M5U methyltransferase family. RlmD subfamily.

It carries out the reaction uridine(1939) in 23S rRNA + S-adenosyl-L-methionine = 5-methyluridine(1939) in 23S rRNA + S-adenosyl-L-homocysteine + H(+). Catalyzes the formation of 5-methyl-uridine at position 1939 (m5U1939) in 23S rRNA. The sequence is that of 23S rRNA (uracil(1939)-C(5))-methyltransferase RlmD from Pseudomonas entomophila (strain L48).